We begin with the raw amino-acid sequence, 228 residues long: Trichome differentiation protein GL1 (228 aa).

HTH myb-type domains are found at residues 11–63 (NQEY…MNYL) and 64–118 (SPNV…SKKL). DNA-binding regions (H-T-H motif) lie at residues 39–63 (WNRI…MNYL) and 91–114 (WSLI…NTHL).

As to quaternary structure, homodimer and heterodimer with MYB82. Interacts directly with GL3 and BHLH2. Part of a complex made of GL1, GL3 or BHLH2, and TTG1. Also interacts with BHLH2/EGL3/MYC146 and BHLH12/MYC1. Interacts with MYB82. Expressed in leaves, stems and flowers. Expressed in trichome cells and in leaf primordia.

The protein localises to the nucleus. Transcription activator, when associated with BHLH2/EGL3/MYC146 or BHLH12/MYC1. Involved in epidermal cell fate specification in leaves. Together with TTG1 and GL3, promotes trichome formation and endoreplication. Regulates the production of a signal that induces hair (trichome) precursor cells on leaf primordia to differentiate. Binds to the WER-binding sites (WBS) promoter regions and activates the transcription of target genes. This chain is Trichome differentiation protein GL1, found in Arabidopsis thaliana (Mouse-ear cress).